Consider the following 335-residue polypeptide: Fructose-1,6-bisphosphatase class 1 (335 aa).

4 residues coordinate Mg(2+): Glu92, Asp114, Leu116, and Asp117. Substrate contacts are provided by residues 117 to 120 (DGSS), Asn209, and Lys275. Residue Glu281 participates in Mg(2+) binding.

The protein belongs to the FBPase class 1 family. As to quaternary structure, homotetramer. Mg(2+) serves as cofactor.

It localises to the cytoplasm. It catalyses the reaction beta-D-fructose 1,6-bisphosphate + H2O = beta-D-fructose 6-phosphate + phosphate. It participates in carbohydrate biosynthesis; gluconeogenesis. This chain is Fructose-1,6-bisphosphatase class 1, found in Verminephrobacter eiseniae (strain EF01-2).